A 273-amino-acid polypeptide reads, in one-letter code: Dermonecrotic toxin LhSicTox-alphaIA2biii (273 aa).

Residue His-5 is part of the active site. Residues Glu-25 and Asp-27 each coordinate Mg(2+). The active-site Nucleophile is His-41. 2 cysteine pairs are disulfide-bonded: Cys-45-Cys-51 and Cys-47-Cys-190. Asp-85 provides a ligand contact to Mg(2+).

It belongs to the arthropod phospholipase D family. Class II subfamily. It depends on Mg(2+) as a cofactor. In terms of tissue distribution, expressed by the venom gland.

It localises to the secreted. It carries out the reaction an N-(acyl)-sphingosylphosphocholine = an N-(acyl)-sphingosyl-1,3-cyclic phosphate + choline. The catalysed reaction is an N-(acyl)-sphingosylphosphoethanolamine = an N-(acyl)-sphingosyl-1,3-cyclic phosphate + ethanolamine. The enzyme catalyses a 1-acyl-sn-glycero-3-phosphocholine = a 1-acyl-sn-glycero-2,3-cyclic phosphate + choline. It catalyses the reaction a 1-acyl-sn-glycero-3-phosphoethanolamine = a 1-acyl-sn-glycero-2,3-cyclic phosphate + ethanolamine. Dermonecrotic toxins cleave the phosphodiester linkage between the phosphate and headgroup of certain phospholipids (sphingolipid and lysolipid substrates), forming an alcohol (often choline) and a cyclic phosphate. This toxin acts on sphingomyelin (SM). It may also act on ceramide phosphoethanolamine (CPE), lysophosphatidylcholine (LPC) and lysophosphatidylethanolamine (LPE), but not on lysophosphatidylserine (LPS), and lysophosphatidylglycerol (LPG). It acts by transphosphatidylation, releasing exclusively cyclic phosphate products as second products. Induces dermonecrosis, hemolysis, increased vascular permeability, edema, inflammatory response, and platelet aggregation. This chain is Dermonecrotic toxin LhSicTox-alphaIA2biii, found in Loxosceles hirsuta (Recluse spider).